Consider the following 115-residue polypeptide: Phosphoribosyl-AMP cyclohydrolase (115 aa).

Asp-80 lines the Mg(2+) pocket. Cys-81 provides a ligand contact to Zn(2+). Residues Asp-82 and Asp-84 each coordinate Mg(2+). Residues Cys-97 and Cys-104 each contribute to the Zn(2+) site.

Belongs to the PRA-CH family. Homodimer. It depends on Mg(2+) as a cofactor. Requires Zn(2+) as cofactor.

The protein resides in the cytoplasm. It carries out the reaction 1-(5-phospho-beta-D-ribosyl)-5'-AMP + H2O = 1-(5-phospho-beta-D-ribosyl)-5-[(5-phospho-beta-D-ribosylamino)methylideneamino]imidazole-4-carboxamide. Its pathway is amino-acid biosynthesis; L-histidine biosynthesis; L-histidine from 5-phospho-alpha-D-ribose 1-diphosphate: step 3/9. Catalyzes the hydrolysis of the adenine ring of phosphoribosyl-AMP. The sequence is that of Phosphoribosyl-AMP cyclohydrolase from Mycobacterium sp. (strain MCS).